The sequence spans 479 residues: Deoxyribodipyrimidine photo-lyase (479 aa).

The region spanning Ser6–Leu137 is the Photolyase/cryptochrome alpha/beta domain. Tyr229 contacts FAD. Arg233 serves as a coordination point for DNA. Residues Thr241 to Ser245 and Glu278 to Tyr285 contribute to the FAD site. 2 interaction with DNA regions span residues Glu278–Tyr285 and Asn344–Arg345. Asp375–Asp377 serves as a coordination point for FAD. Gln407 serves as a coordination point for DNA.

The protein belongs to the DNA photolyase class-1 family. In terms of assembly, monomer. FAD serves as cofactor. The cofactor is (6R)-5,10-methylene-5,6,7,8-tetrahydrofolate.

It catalyses the reaction cyclobutadipyrimidine (in DNA) = 2 pyrimidine residues (in DNA).. Involved in repair of UV radiation-induced DNA damage. Catalyzes the light-dependent monomerization (300-600 nm) of cyclobutyl pyrimidine dimers (in cis-syn configuration), which are formed between adjacent bases on the same DNA strand upon exposure to ultraviolet radiation. This Alkalihalophilus pseudofirmus (strain ATCC BAA-2126 / JCM 17055 / OF4) (Bacillus pseudofirmus) protein is Deoxyribodipyrimidine photo-lyase (phr).